Reading from the N-terminus, the 156-residue chain is Deoxyuridine 5'-triphosphate nucleotidohydrolase (156 aa).

Belongs to the dCTP deaminase family. Archaeal dUTPase subfamily. As to quaternary structure, homotrimer.

The enzyme catalyses dUTP + H2O = dUMP + diphosphate + H(+). The protein operates within pyrimidine metabolism; dUMP biosynthesis; dUMP from dCTP (dUTP route): step 2/2. Functionally, this enzyme is involved in nucleotide metabolism: it produces dUMP, the immediate precursor of thymidine nucleotides and it decreases the intracellular concentration of dUTP so that uracil cannot be incorporated into DNA. The polypeptide is Deoxyuridine 5'-triphosphate nucleotidohydrolase (Methanocaldococcus jannaschii (strain ATCC 43067 / DSM 2661 / JAL-1 / JCM 10045 / NBRC 100440) (Methanococcus jannaschii)).